The following is a 401-amino-acid chain: MKTLKDLGDLKGKRVLVRADFNVPLDGTTITDDGRIKAALPTIKTLREEGAKVILMAHLGRPKGKVVPELSLAPVAARLGELLGANVPLAKDTYGEDAQAKVAAMNDGDVVLLENVRFNPEETSKDADERAAYAKKIAALGEAFVSDGFGVVHRAQGSNYDVAADLPAAAGLLVEKEVKALSKATENPERPFTVVLGGSKVSDKLGVIENLLDKANRLVIGGGMVFTFLKAKGYEVGTSLLEEDQLEKVKGYIETAEKNGVELVLPTDVVVNAGFPAGDTPVAPEVVAADAIPADKMGLDIGPESQKLFHDKIVDSKTVVWNGPMGVFEVPEFAAGTKAVAQGLVDATAVGAFTIVGGGDSASAVRNLGFPEDGFSHISTGGGASLEFLEGKELPGLKVLE.

Residues 20 to 22, Arg35, 58 to 61, Arg117, and Arg154 each bind substrate; these read DFN and HLGR. ATP-binding positions include Lys204, Gly298, Glu329, and 358-361; that span reads GGDS.

Belongs to the phosphoglycerate kinase family. As to quaternary structure, monomer.

Its subcellular location is the cytoplasm. The catalysed reaction is (2R)-3-phosphoglycerate + ATP = (2R)-3-phospho-glyceroyl phosphate + ADP. The protein operates within carbohydrate degradation; glycolysis; pyruvate from D-glyceraldehyde 3-phosphate: step 2/5. The chain is Phosphoglycerate kinase from Bifidobacterium longum (strain NCC 2705).